We begin with the raw amino-acid sequence, 245 residues long: Orotidine 5'-phosphate decarboxylase (245 aa).

Residues Asp22, Lys44, 71–80 (DLKFHDIPNT), Thr131, Arg192, Gln201, Gly221, and Arg222 each bind substrate. Catalysis depends on Lys73, which acts as the Proton donor.

Belongs to the OMP decarboxylase family. Type 1 subfamily. Homodimer.

The enzyme catalyses orotidine 5'-phosphate + H(+) = UMP + CO2. It participates in pyrimidine metabolism; UMP biosynthesis via de novo pathway; UMP from orotate: step 2/2. Catalyzes the decarboxylation of orotidine 5'-monophosphate (OMP) to uridine 5'-monophosphate (UMP). The chain is Orotidine 5'-phosphate decarboxylase from Shigella dysenteriae serotype 1 (strain Sd197).